Reading from the N-terminus, the 316-residue chain is Adenine deaminase (316 aa).

The Zn(2+) site is built by histidine 14, histidine 16, and histidine 194. The Proton donor role is filled by glutamate 197. Aspartate 275 serves as a coordination point for Zn(2+). Aspartate 276 contacts substrate.

This sequence belongs to the metallo-dependent hydrolases superfamily. Adenosine and AMP deaminases family. Adenine deaminase type 2 subfamily. Requires Zn(2+) as cofactor.

The catalysed reaction is adenine + H2O + H(+) = hypoxanthine + NH4(+). Its function is as follows. Catalyzes the hydrolytic deamination of adenine to hypoxanthine. Plays an important role in the purine salvage pathway and in nitrogen catabolism. This chain is Adenine deaminase, found in Pseudomonas paraeruginosa (strain DSM 24068 / PA7) (Pseudomonas aeruginosa (strain PA7)).